We begin with the raw amino-acid sequence, 264 residues long: Pimeloyl-[acyl-carrier protein] methyl ester esterase (264 aa).

In terms of domain architecture, AB hydrolase-1 spans 23–244 (LVMLHGWGVN…MLAKASHAPF (222 aa)). Residues tryptophan 29, 87–88 (SL), and 150–154 (FLAIQ) each bind substrate. The active-site Nucleophile is serine 87. Residues aspartate 214 and histidine 241 contribute to the active site. Position 241 (histidine 241) interacts with substrate.

The protein belongs to the AB hydrolase superfamily. Carboxylesterase BioH family. Monomer.

The protein resides in the cytoplasm. It carries out the reaction 6-carboxyhexanoyl-[ACP] methyl ester + H2O = 6-carboxyhexanoyl-[ACP] + methanol + H(+). It participates in cofactor biosynthesis; biotin biosynthesis. Functionally, the physiological role of BioH is to remove the methyl group introduced by BioC when the pimeloyl moiety is complete. It allows to synthesize pimeloyl-ACP via the fatty acid synthetic pathway through the hydrolysis of the ester bonds of pimeloyl-ACP esters. The polypeptide is Pimeloyl-[acyl-carrier protein] methyl ester esterase (Shewanella sp. (strain MR-7)).